Reading from the N-terminus, the 116-residue chain is Putative transmembrane protein ORF116 (116 aa).

3 consecutive transmembrane segments (helical) span residues 20–40 (IVTLSVGIALLVLANAFAYAL), 53–73 (LLGGIVLLVLSMLLTLSTNSI), and 76–96 (FRGAFTFAIGEIIIGGLDVIN).

The protein localises to the host membrane. The protein is Putative transmembrane protein ORF116 of Acidianus bottle-shaped virus (isolate Italy/Pozzuoli) (ABV).